A 201-amino-acid polypeptide reads, in one-letter code: Dephospho-CoA kinase (201 aa).

The DPCK domain occupies 7 to 201 (AIALSGGIGT…IETIKKDFHV (195 aa)). 15–20 (GTGKST) lines the ATP pocket.

Belongs to the CoaE family.

The protein localises to the cytoplasm. The catalysed reaction is 3'-dephospho-CoA + ATP = ADP + CoA + H(+). The protein operates within cofactor biosynthesis; coenzyme A biosynthesis; CoA from (R)-pantothenate: step 5/5. Functionally, catalyzes the phosphorylation of the 3'-hydroxyl group of dephosphocoenzyme A to form coenzyme A. The polypeptide is Dephospho-CoA kinase (Wolinella succinogenes (strain ATCC 29543 / DSM 1740 / CCUG 13145 / JCM 31913 / LMG 7466 / NCTC 11488 / FDC 602W) (Vibrio succinogenes)).